We begin with the raw amino-acid sequence, 448 residues long: FAD-linked oxidoreductase nodO (448 aa).

The 172-residue stretch at 35-206 (PEHFPLAIVK…IRFFLKTCPL (172 aa)) folds into the FAD-binding PCMH-type domain.

The protein belongs to the oxygen-dependent FAD-linked oxidoreductase family. It depends on FAD as a cofactor.

Its pathway is secondary metabolite biosynthesis. FAD-linked oxidoreductase; part of the gene cluster that mediates the biosynthesis of the indole diterpenes nodulisporic acids (NA). Nodulisporic acid A (NAA) and its chemically modified derivatives are of particular significance because of their highly potent insecticidal activity against blood-feeding arthropods and lack of observable adverse effects on mammals, in particular the tremogenicity associated with the paspaline-derived IDTs is not observed. The geranylgeranyl diphosphate (GGPP) synthase ggs1, localized outside of the cluster, is proposed to catalyze the first step in nodulisporic acid biosynthesis via conversion of farnesyl pyrophosphate and isopentyl pyrophosphate into geranylgeranyl pyrophosphate (GGPP). Condensation of indole-3-glycerol phosphate with GGPP by the prenyl transferase nodC then forms 3-geranylgeranylindole (3-GGI). Epoxidation by the FAD-dependent monooxygenase nodM leads to a single-epoxidized-GGI that is substrate of the terpene cyclase nodB for cyclization to yield emindole SB. The terminal methyl carbon, C28, of emindole SB is then oxidized by the cytochrome P450 monooxygenase nodW to produce nodulisporic acid F (NAF), the pentacyclic core of NAA. NAF is converted to nodulisporic acid E (NAE) via prenylation. This step is probably performed by one of the indole diterpene prenyltransferases nodD1 or nodD2. Several oxidation steps performed by the FAD-linked oxidoreductase nodO and one of the cytochrome P450 monooxygenase nodR, nodX or nodZ further convert NAE to nodulisporic acid D (NAD). NAD is substrate of cytochrome P450 monooxygenase nodJ to produce the precursor of nodulisporic acid C (NAC), converted to NAC by one of the indole diterpene prenyltransferases nodD1 or nodD2. The FAD-dependent monooxygenase nodY2 then oxidizes NAC to nodulisporic acid B (NAB). Finally NAB is converted to NAA by one of the cytochrome P450 monooxygenases nodR, nodX or nodZ. The sequence is that of FAD-linked oxidoreductase nodO from Hypoxylon pulicicidum.